A 212-amino-acid chain; its full sequence is Pyridoxine/pyridoxamine 5'-phosphate oxidase (212 aa).

FMN contacts are provided by residues 61 to 66 (RTVLLK), 76 to 77 (FT), lysine 82, lysine 83, and glutamine 105. A substrate-binding site is contributed by lysine 66. Substrate-binding residues include tyrosine 123, arginine 127, and serine 131. FMN-binding positions include 140-141 (QS) and tryptophan 185. Residue 191–193 (RLH) participates in substrate binding. An FMN-binding site is contributed by arginine 195.

It belongs to the pyridoxamine 5'-phosphate oxidase family. Homodimer. The cofactor is FMN.

It catalyses the reaction pyridoxamine 5'-phosphate + O2 + H2O = pyridoxal 5'-phosphate + H2O2 + NH4(+). The enzyme catalyses pyridoxine 5'-phosphate + O2 = pyridoxal 5'-phosphate + H2O2. It participates in cofactor metabolism; pyridoxal 5'-phosphate salvage; pyridoxal 5'-phosphate from pyridoxamine 5'-phosphate: step 1/1. The protein operates within cofactor metabolism; pyridoxal 5'-phosphate salvage; pyridoxal 5'-phosphate from pyridoxine 5'-phosphate: step 1/1. Catalyzes the oxidation of either pyridoxine 5'-phosphate (PNP) or pyridoxamine 5'-phosphate (PMP) into pyridoxal 5'-phosphate (PLP). This chain is Pyridoxine/pyridoxamine 5'-phosphate oxidase, found in Vesicomyosocius okutanii subsp. Calyptogena okutanii (strain HA).